The sequence spans 682 residues: Actin-binding LIM protein 3 (682 aa).

Methionine 1 carries the post-translational modification N-acetylmethionine. 4 LIM zinc-binding domains span residues 21-80, 80-140, 149-208, and 208-268; these read IQCY…LYGT, TRCD…MTSS, SHCA…QFGI, and IKCE…ARAE. Serine 277, serine 280, serine 282, serine 286, serine 290, serine 337, serine 372, and serine 373 each carry phosphoserine. 2 disordered regions span residues 372-426 and 440-475; these read SSPG…SYQA and YRKPPIYKRHGDLSTATKSKTSEDISQASKYSPAYS. Tyrosine 376 carries the post-translational modification Phosphotyrosine. Phosphoserine occurs at positions 379 and 388. 3 stretches are compositionally biased toward polar residues: residues 380-393, 405-425, and 453-466; these read PTYSRQGMSPTFSR, GRSSPYHSQLDVRSSTPTSYQ, and STATKSKTSEDISQ. Serine 492, serine 502, and serine 503 each carry phosphoserine. Threonine 542 carries the phosphothreonine modification. Phosphoserine is present on residues serine 566, serine 575, and serine 606. An HP domain is found at 614–682; sequence MREYKIYPYE…NELKKQARLF (69 aa). Arginine 630 carries the post-translational modification Omega-N-methylarginine.

Directly interacts with F-actin and ABRA. In terms of tissue distribution, expressed in heart, brain, lung and liver. In the brain, highly expressed in the olfactory bulb. In the hippocampus, expressed selectively in the CA2 and CA3 fields. In the cerebellum, expressed in internal granular cells.

It localises to the cytoplasm. In terms of biological role, may act as scaffold protein. May stimulate ABRA activity and ABRA-dependent SRF transcriptional activity. The protein is Actin-binding LIM protein 3 (Ablim3) of Mus musculus (Mouse).